The following is a 763-amino-acid chain: 5-methyltetrahydropteroyltriglutamate--homocysteine methyltransferase (763 aa).

5-methyltetrahydropteroyltri-L-glutamate-binding positions include 16–19 and Lys-117; that span reads RELK. Residues 440–442 and Glu-493 contribute to the L-homocysteine site; that span reads IGS. L-methionine-binding positions include 440–442 and Glu-493; that span reads IGS. Residues 524–525 and Trp-570 contribute to the 5-methyltetrahydropteroyltri-L-glutamate site; that span reads RC. Position 608 (Asp-608) interacts with L-homocysteine. Residue Asp-608 coordinates L-methionine. Glu-614 is a binding site for 5-methyltetrahydropteroyltri-L-glutamate. 3 residues coordinate Zn(2+): His-650, Cys-652, and Glu-674. The active-site Proton donor is His-703. Cys-735 serves as a coordination point for Zn(2+).

The protein belongs to the vitamin-B12 independent methionine synthase family. Zn(2+) is required as a cofactor.

The enzyme catalyses 5-methyltetrahydropteroyltri-L-glutamate + L-homocysteine = tetrahydropteroyltri-L-glutamate + L-methionine. It functions in the pathway amino-acid biosynthesis; L-methionine biosynthesis via de novo pathway; L-methionine from L-homocysteine (MetE route): step 1/1. Functionally, catalyzes the transfer of a methyl group from 5-methyltetrahydrofolate to homocysteine resulting in methionine formation. The chain is 5-methyltetrahydropteroyltriglutamate--homocysteine methyltransferase from Alcanivorax borkumensis (strain ATCC 700651 / DSM 11573 / NCIMB 13689 / SK2).